The sequence spans 447 residues: Signal recognition particle 54 kDa protein (447 aa).

Residues 103–110 (GVQGSGKT), 185–189 (DTAGR), and 245–248 (TKMD) each bind GTP.

This sequence belongs to the GTP-binding SRP family. SRP54 subfamily. As to quaternary structure, part of the signal recognition particle protein translocation system, which is composed of SRP and FtsY. Archaeal SRP consists of a 7S RNA molecule of 300 nucleotides and two protein subunits: SRP54 and SRP19.

The protein localises to the cytoplasm. It carries out the reaction GTP + H2O = GDP + phosphate + H(+). Functionally, involved in targeting and insertion of nascent membrane proteins into the cytoplasmic membrane. Binds to the hydrophobic signal sequence of the ribosome-nascent chain (RNC) as it emerges from the ribosomes. The SRP-RNC complex is then targeted to the cytoplasmic membrane where it interacts with the SRP receptor FtsY. The sequence is that of Signal recognition particle 54 kDa protein from Saccharolobus islandicus (strain Y.G.57.14 / Yellowstone #1) (Sulfolobus islandicus).